Here is a 695-residue protein sequence, read N- to C-terminus: ATP-dependent DNA helicase II subunit 2 (695 aa).

One can recognise a Ku domain in the interval 229-461 (FSIGNRDSKD…IDFAVSNYID (233 aa)).

The protein belongs to the ku80 family. As to quaternary structure, heterodimer of pku70 and pku80.

It is found in the nucleus. It localises to the chromosome. The protein localises to the telomere. It catalyses the reaction ATP + H2O = ADP + phosphate + H(+). Single-stranded DNA-dependent ATP-dependent helicase. Involved in non-homologous end joining (NHEJ) DNA double strand break repair. DNA-binding is sequence-independent but has a high affinity to nicks in double-stranded DNA and to the ends of duplex DNA. Binds to naturally occurring chromosomal ends, and therefore provides chromosomal end protection. Required also for telomere recombination to repair telomeric ends in the absence of telomerase. ku70, of the ku70/ku80 heterodimer, binds to the stem loop of tlc1, the RNA component of telomerase. Involved in telomere maintenance. Interacts with telomeric repeats and subtelomeric sequences thereby controlling telomere length and protecting against subtelomeric rearrangement. Required for mating-type switching. The polypeptide is ATP-dependent DNA helicase II subunit 2 (pku80) (Schizosaccharomyces pombe (strain 972 / ATCC 24843) (Fission yeast)).